The sequence spans 220 residues: Ribonuclease HII (220 aa).

The RNase H type-2 domain maps to 1-210 (MKVAGVDEAG…ARKIEERFRK (210 aa)). A divalent metal cation-binding residues include Asp7, Glu8, and Asp105.

Belongs to the RNase HII family. It depends on Mn(2+) as a cofactor. Mg(2+) serves as cofactor.

Its subcellular location is the cytoplasm. The enzyme catalyses Endonucleolytic cleavage to 5'-phosphomonoester.. In terms of biological role, endonuclease that specifically degrades the RNA of RNA-DNA hybrids. The polypeptide is Ribonuclease HII (rnhB) (Pyrococcus horikoshii (strain ATCC 700860 / DSM 12428 / JCM 9974 / NBRC 100139 / OT-3)).